We begin with the raw amino-acid sequence, 426 residues long: Docking protein 3 (426 aa).

The region spanning 4-115 (PVKDGIIYVQ…WIEQLCQLAF (112 aa)) is the PH domain. Residues 145–249 (DLTEFPVLVL…ACQQQGQESP (105 aa)) form the IRS-type PTB domain. Positions 243–282 (QQGQESPQPSAQGLSNQPWGAEAEDPQCSPTLGRAHSGSH) are disordered. Residues 247 to 260 (ESPQPSAQGLSNQP) are compositionally biased toward polar residues. Y331 is modified (phosphotyrosine). The segment at 357 to 426 (GCRQAPEGHS…RDGPGARDWS (70 aa)) is disordered. A compositionally biased stretch (basic residues) spans 402 to 411 (KPQRTLRAKL).

This sequence belongs to the DOK family. Type A subfamily. As to quaternary structure, homooligomer. Interacts with GRB2 and INPP5D/SHIP. Post-translationally, tyrosine-phosphorylated in the presence of GRB2.

The protein localises to the cytoplasm. It localises to the cell membrane. In terms of biological role, DOK proteins are enzymatically inert adaptor or scaffolding proteins. They provide a docking platform for the assembly of multimolecular signaling complexes. Plays a role as negative regulator of the mobilization of calcium ions and of calcium signaling. The sequence is that of Docking protein 3 (DOK3) from Gallus gallus (Chicken).